The sequence spans 228 residues: Small ribosomal subunit protein uS3 (228 aa).

A KH type-2 domain is found at 39 to 107 (VREYLQDKLK…PVHINIEEIR (69 aa)).

Belongs to the universal ribosomal protein uS3 family. As to quaternary structure, part of the 30S ribosomal subunit. Forms a tight complex with proteins S10 and S14.

Binds the lower part of the 30S subunit head. Binds mRNA in the 70S ribosome, positioning it for translation. This is Small ribosomal subunit protein uS3 from Pseudomonas fluorescens (strain ATCC BAA-477 / NRRL B-23932 / Pf-5).